A 149-amino-acid chain; its full sequence is Transcriptional repressor NrdR (149 aa).

A zinc finger lies at Cys3–Cys34. The 91-residue stretch at Pro49–Glu139 folds into the ATP-cone domain.

Belongs to the NrdR family. The cofactor is Zn(2+).

Functionally, negatively regulates transcription of bacterial ribonucleotide reductase nrd genes and operons by binding to NrdR-boxes. This Enterobacter sp. (strain 638) protein is Transcriptional repressor NrdR.